Here is a 404-residue protein sequence, read N- to C-terminus: S-adenosylmethionine synthase (404 aa).

Position 139–144 (139–144 (GKGSTD)) interacts with ATP.

This sequence belongs to the AdoMet synthase 2 family. It depends on Mg(2+) as a cofactor.

The enzyme catalyses L-methionine + ATP + H2O = S-adenosyl-L-methionine + phosphate + diphosphate. The protein operates within amino-acid biosynthesis; S-adenosyl-L-methionine biosynthesis; S-adenosyl-L-methionine from L-methionine: step 1/1. Its function is as follows. Catalyzes the formation of S-adenosylmethionine from methionine and ATP. This chain is S-adenosylmethionine synthase, found in Saccharolobus islandicus (strain Y.N.15.51 / Yellowstone #2) (Sulfolobus islandicus).